Here is a 286-residue protein sequence, read N- to C-terminus: Pantothenate synthetase (286 aa).

30 to 37 (MGNLHAGH) is an ATP binding site. His-37 (proton donor) is an active-site residue. Gln-61 provides a ligand contact to (R)-pantoate. Gln-61 contacts beta-alanine. 149 to 152 (GEKD) serves as a coordination point for ATP. Gln-155 is a (R)-pantoate binding site. Residues Val-178 and 186-189 (MSSR) contribute to the ATP site.

Belongs to the pantothenate synthetase family. Homodimer.

The protein resides in the cytoplasm. The enzyme catalyses (R)-pantoate + beta-alanine + ATP = (R)-pantothenate + AMP + diphosphate + H(+). It functions in the pathway cofactor biosynthesis; (R)-pantothenate biosynthesis; (R)-pantothenate from (R)-pantoate and beta-alanine: step 1/1. In terms of biological role, catalyzes the condensation of pantoate with beta-alanine in an ATP-dependent reaction via a pantoyl-adenylate intermediate. This chain is Pantothenate synthetase, found in Thioalkalivibrio sulfidiphilus (strain HL-EbGR7).